Here is a 409-residue protein sequence, read N- to C-terminus: Nucleoprotein (409 aa).

4 disordered regions span residues 1–32 (MASG…SSGN), 46–68 (IPPP…SQQH), 164–196 (RSGR…EDDL), and 238–258 (VDQV…DDKM). Low complexity predominate over residues 15–31 (PVIKLGGPKPPKVGSSG). The tract at residues 29–160 (SSGNASWFQA…GNFRWDFIPL (132 aa)) is RNA-binding. Residues 31–156 (GNASWFQAIK…GGPDGNFRWD (126 aa)) form the CoV N NTD domain. Over residues 166–179 (GRSTAASSAASSRA) the composition is skewed to low complexity. Basic and acidic residues-rich tracts occupy residues 180 to 192 (PSRE…RSGS) and 247 to 258 (KGKEGNFGDDKM). A phosphoserine; by host mark is found at Ser-190 and Ser-192. In terms of domain architecture, CoV N CTD spans 215-331 (TKAKADEMAH…QCVDGVGTRP (117 aa)). Residues 226 to 333 (RYCKRTIPPN…VDGVGTRPKD (108 aa)) are dimerization. Cys-320 and Cys-323 are oxidised to a cystine. Positions 326–409 (GVGTRPKDDE…GDAALGENEL (84 aa)) are disordered. Over residues 358–367 (QRPKKEKKPK) the composition is skewed to basic residues. The segment covering 368–384 (KHDDEVDKALTSDEERN) has biased composition (basic and acidic residues). Thr-378 is modified (phosphothreonine; by host). The residue at position 379 (Ser-379) is a Phosphoserine; by host.

The protein belongs to the gammacoronavirus nucleocapsid protein family. Homooligomer. Both monomeric and oligomeric forms interact with RNA. Interacts with protein M. Interacts with NSP3; this interaction serves to tether the genome to the newly translated replicase-transcriptase complex at a very early stage of infection. In terms of processing, ADP-ribosylated. The ADP-ribosylation is retained in the virion during infection. Post-translationally, phosphorylated on serine and threonine residues.

It is found in the virion. The protein resides in the host endoplasmic reticulum-Golgi intermediate compartment. The protein localises to the host Golgi apparatus. In terms of biological role, packages the positive strand viral genome RNA into a helical ribonucleocapsid (RNP) and plays a fundamental role during virion assembly through its interactions with the viral genome and membrane protein M. Plays an important role in enhancing the efficiency of subgenomic viral RNA transcription as well as viral replication. The polypeptide is Nucleoprotein (Avian infectious bronchitis virus (strain M41) (IBV)).